A 948-amino-acid chain; its full sequence is RNA polymerase-associated protein RapA (948 aa).

The 169-residue stretch at 164 to 332 (EVADRIAPRV…FARLRLLDPN (169 aa)) folds into the Helicase ATP-binding domain. An ATP-binding site is contributed by 177 to 184 (DEVGLGKT). Residues 278–281 (DEAH) carry the DEAH box motif. Positions 473-627 (RVDWLIDTLK…TCPTGNALQH (155 aa)) constitute a Helicase C-terminal domain.

The protein belongs to the SNF2/RAD54 helicase family. RapA subfamily. In terms of assembly, interacts with the RNAP. Has a higher affinity for the core RNAP than for the holoenzyme. Its ATPase activity is stimulated by binding to RNAP.

Functionally, transcription regulator that activates transcription by stimulating RNA polymerase (RNAP) recycling in case of stress conditions such as supercoiled DNA or high salt concentrations. Probably acts by releasing the RNAP, when it is trapped or immobilized on tightly supercoiled DNA. Does not activate transcription on linear DNA. Probably not involved in DNA repair. This Pseudomonas syringae pv. syringae (strain B728a) protein is RNA polymerase-associated protein RapA.